A 350-amino-acid chain; its full sequence is Tetraacyldisaccharide 4'-kinase (350 aa).

Serine 48–threonine 55 is an ATP binding site.

Belongs to the LpxK family.

It catalyses the reaction a lipid A disaccharide + ATP = a lipid IVA + ADP + H(+). The protein operates within glycolipid biosynthesis; lipid IV(A) biosynthesis; lipid IV(A) from (3R)-3-hydroxytetradecanoyl-[acyl-carrier-protein] and UDP-N-acetyl-alpha-D-glucosamine: step 6/6. Its function is as follows. Transfers the gamma-phosphate of ATP to the 4'-position of a tetraacyldisaccharide 1-phosphate intermediate (termed DS-1-P) to form tetraacyldisaccharide 1,4'-bis-phosphate (lipid IVA). The chain is Tetraacyldisaccharide 4'-kinase from Chlorobium limicola (strain DSM 245 / NBRC 103803 / 6330).